Here is a 1002-residue protein sequence, read N- to C-terminus: yemanuclein (1002 aa).

The Nuclear localization signal signature appears at 80-85; the sequence is KKKTKK. Disordered stretches follow at residues 193–358, 395–428, and 642–725; these read AIIK…KKVV, VSTD…GQEN, and KLKA…AKQV. The segment covering 207-217 has biased composition (low complexity); it reads SSSSESSSSSS. The span at 218–262 shows a compositional bias: acidic residues; it reads GDDDENDDGNNEEDDESDSEDDSEENDESDSEDDSESESLEDEDS. Tandem repeats lie at residues 230–241 and 242–253. Residues 230–253 are 2 X 12 AA tandem repeats; the sequence is EDDESDSEDDSEENDESDSEDDSE. Low complexity-rich tracts occupy residues 286-320, 336-358, and 395-404; these read TGKS…RPST, QPSS…KKVV, and VSTDVSSSDS. The span at 408–427 shows a compositional bias: basic and acidic residues; it reads ESEHGRADRQAGQHGKDGQE. Residues 653-667 show a composition bias toward low complexity; sequence PASASPKPVGVVSAP. Basic and acidic residues predominate over residues 679–689; it reads AVEDPRSRGNS. Phosphoserine occurs at positions 685 and 689. Over residues 690–701 the composition is skewed to low complexity; sequence DTDSATSASSNS. Serine 885, serine 886, and serine 887 each carry phosphoserine. The segment at 901 to 928 is disordered; that stretch reads SKPQKKVQSKPKNKTQNRGRSSLGAVGQ. The span at 903-917 shows a compositional bias: basic residues; the sequence is PQKKVQSKPKNKTQN.

In terms of processing, the N-terminus is blocked. As to expression, oocyte specific.

It localises to the nucleus. The protein localises to the nucleoplasm. Its subcellular location is the chromosome. It is found in the centromere. The protein resides in the kinetochore. May play a key role in egg organization. May be a transcriptional regulator having a role in chromatin remodeling in concert with Hira, a histone chaperone. Involved in chromosome segregation by affecting kinetochores function in the first meiotic division. This Drosophila melanogaster (Fruit fly) protein is yemanuclein.